The sequence spans 166 residues: Cofilin-2 (166 aa).

At alanine 2 the chain carries N-acetylalanine. A Phosphoserine modification is found at serine 3. Residues glycine 4–leucine 153 form the ADF-H domain. Threonine 6 carries the phosphothreonine modification. A Nuclear localization signal motif is present at residues lysine 30–lysine 34.

This sequence belongs to the actin-binding proteins ADF family. The phosphorylation of Ser-24 may prevent recognition of the nuclear localization signal.

The protein localises to the nucleus matrix. It localises to the cytoplasm. It is found in the cytoskeleton. Its function is as follows. Controls reversibly actin polymerization and depolymerization in a pH-sensitive manner. It has the ability to bind G- and F-actin in a 1:1 ratio of cofilin to actin. It is the major component of intranuclear and cytoplasmic actin rods. This is Cofilin-2 (CFL2) from Bos taurus (Bovine).